Here is a 768-residue protein sequence, read N- to C-terminus: U-box domain-containing protein 45 (768 aa).

One can recognise a U-box domain in the interval valine 278–glutamine 352. 5 ARM repeats span residues glutamate 454–valine 497, asparagine 500–glutamate 540, lysine 542–threonine 579, proline 581–leucine 620, and alanine 623–asparagine 662.

Binds to SD129.

It catalyses the reaction S-ubiquitinyl-[E2 ubiquitin-conjugating enzyme]-L-cysteine + [acceptor protein]-L-lysine = [E2 ubiquitin-conjugating enzyme]-L-cysteine + N(6)-ubiquitinyl-[acceptor protein]-L-lysine.. Its pathway is protein modification; protein ubiquitination. In terms of biological role, functions as an E3 ubiquitin ligase. This Arabidopsis thaliana (Mouse-ear cress) protein is U-box domain-containing protein 45 (PUB45).